The sequence spans 154 residues: Transcription antitermination protein NusB (154 aa).

It belongs to the NusB family.

Involved in transcription antitermination. Required for transcription of ribosomal RNA (rRNA) genes. Binds specifically to the boxA antiterminator sequence of the ribosomal RNA (rrn) operons. In Desulfosudis oleivorans (strain DSM 6200 / JCM 39069 / Hxd3) (Desulfococcus oleovorans), this protein is Transcription antitermination protein NusB.